A 455-amino-acid chain; its full sequence is ATP-dependent protease ATPase subunit HslU (455 aa).

ATP is bound by residues I19, 61 to 66 (GVGKTE), D268, E333, and R405.

This sequence belongs to the ClpX chaperone family. HslU subfamily. A double ring-shaped homohexamer of HslV is capped on each side by a ring-shaped HslU homohexamer. The assembly of the HslU/HslV complex is dependent on binding of ATP.

The protein localises to the cytoplasm. Functionally, ATPase subunit of a proteasome-like degradation complex; this subunit has chaperone activity. The binding of ATP and its subsequent hydrolysis by HslU are essential for unfolding of protein substrates subsequently hydrolyzed by HslV. HslU recognizes the N-terminal part of its protein substrates and unfolds these before they are guided to HslV for hydrolysis. This Francisella philomiragia subsp. philomiragia (strain ATCC 25017 / CCUG 19701 / FSC 153 / O#319-036) protein is ATP-dependent protease ATPase subunit HslU.